An 82-amino-acid polypeptide reads, in one-letter code: Bowman-Birk type proteinase inhibitor (82 aa).

The disordered stretch occupies residues 1 to 24; that stretch reads SGHHDETTDEPSESSKPCCDQCSC. Disulfide bonds link Cys18-Cys72, Cys19-Cys34, Cys22-Cys68, Cys24-Cys32, Cys42-Cys49, Cys46-Cys61, and Cys51-Cys59.

It belongs to the Bowman-Birk serine protease inhibitor family.

Functionally, trypsin and chymotrypsin are inhibited simultaneously. There are two separate reactive sites for trypsin and chymotrypsin but they do not inhibit simultaneously. The chain is Bowman-Birk type proteinase inhibitor from Phaseolus angularis (Azuki bean).